Consider the following 319-residue polypeptide: Acetyl-coenzyme A carboxylase carboxyl transferase subunit alpha (319 aa).

One can recognise a CoA carboxyltransferase C-terminal domain in the interval asparagine 35 to aspartate 296.

It belongs to the AccA family. Acetyl-CoA carboxylase is a heterohexamer composed of biotin carboxyl carrier protein (AccB), biotin carboxylase (AccC) and two subunits each of ACCase subunit alpha (AccA) and ACCase subunit beta (AccD).

Its subcellular location is the cytoplasm. It carries out the reaction N(6)-carboxybiotinyl-L-lysyl-[protein] + acetyl-CoA = N(6)-biotinyl-L-lysyl-[protein] + malonyl-CoA. Its pathway is lipid metabolism; malonyl-CoA biosynthesis; malonyl-CoA from acetyl-CoA: step 1/1. Functionally, component of the acetyl coenzyme A carboxylase (ACC) complex. First, biotin carboxylase catalyzes the carboxylation of biotin on its carrier protein (BCCP) and then the CO(2) group is transferred by the carboxyltransferase to acetyl-CoA to form malonyl-CoA. The polypeptide is Acetyl-coenzyme A carboxylase carboxyl transferase subunit alpha (Pectobacterium atrosepticum (strain SCRI 1043 / ATCC BAA-672) (Erwinia carotovora subsp. atroseptica)).